Here is a 156-residue protein sequence, read N- to C-terminus: uncharacterized protein (156 aa).

This is an uncharacterized protein from Methanocaldococcus jannaschii (strain ATCC 43067 / DSM 2661 / JAL-1 / JCM 10045 / NBRC 100440) (Methanococcus jannaschii).